Here is a 481-residue protein sequence, read N- to C-terminus: MHTHNHFKTPSDAEEVDDLDDEMVMGVIAEIEQEVLFESDSDDDGFGAEQLGAPPPDDDNDQISSSDDSFDPNAEDSDSDDSMQHEEQAQATSAKRRKDDDGPSGSNRDVETNFDLDLEDETDETVRAIIAAIKKPRSAPPEIKLEDFVTDISFHPERNIIALATIIGDVHLYEYANEGNKLIRTIEVHSKACRDVEFTEDGRNLLTCSKDKCVMVTDMETEKLKKLYETAHDDAINTLHVLNENLFATGDDAGTVKLWDLRTKQHVFELKQIDDQVTQLLSNEQNTLLLATSADGYLTTFNIPGRKLYVQSEPYEEELNCMGIYRGDSKLVVGTSKGKLYSYNWGSFGYHCDMYPGIKSPISLMIPITDRIACVAGEDGNIRACHITPYRNLGVVGQHNMPIEALDVNSTGELLASSSHNNDVRFWNVKYFEDFGDIKYNEKHNAYKEQRHNLPSSKCTNTGDFFADLAKQEDDEDDDAT.

The disordered stretch occupies residues 1–116 (MHTHNHFKTP…NRDVETNFDL (116 aa)). 3 stretches are compositionally biased toward acidic residues: residues 12-23 (DAEEVDDLDDEM), 31-46 (IEQE…DDGF), and 68-81 (DSFD…DSDD). 6 WD repeats span residues 144-183 (KLED…NKLI), 188-227 (VHSK…LKKL), 231-269 (AHDD…HVFE), 272-311 (QIDD…LYVQ), 314-353 (PYEE…YHCD), and 398-437 (QHNM…DFGD).

Belongs to the WD repeat WDR55 family.

In Drosophila ananassae (Fruit fly), this protein is WD repeat-containing protein 55 homolog.